Here is a 419-residue protein sequence, read N- to C-terminus: Tyrosine--tRNA ligase (419 aa).

Y34 serves as a coordination point for L-tyrosine. Positions 39–48 (PTADSLHIGH) match the 'HIGH' region motif. Residues Y169, Q173, and D176 each coordinate L-tyrosine. The short motif at 230 to 234 (KFGKT) is the 'KMSKS' region element. K233 provides a ligand contact to ATP. The 68-residue stretch at 352 to 419 (VPLVELLVSA…KKKYYLIRYA (68 aa)) folds into the S4 RNA-binding domain.

The protein belongs to the class-I aminoacyl-tRNA synthetase family. TyrS type 1 subfamily. Homodimer.

It localises to the cytoplasm. The enzyme catalyses tRNA(Tyr) + L-tyrosine + ATP = L-tyrosyl-tRNA(Tyr) + AMP + diphosphate + H(+). Its function is as follows. Catalyzes the attachment of tyrosine to tRNA(Tyr) in a two-step reaction: tyrosine is first activated by ATP to form Tyr-AMP and then transferred to the acceptor end of tRNA(Tyr). This chain is Tyrosine--tRNA ligase (tyrS), found in Geobacillus stearothermophilus (Bacillus stearothermophilus).